Here is a 258-residue protein sequence, read N- to C-terminus: Regulatory protein RecX (258 aa).

This sequence belongs to the RecX family.

Its subcellular location is the cytoplasm. Its function is as follows. Modulates RecA activity. The sequence is that of Regulatory protein RecX from Streptococcus pneumoniae serotype 19F (strain G54).